Consider the following 71-residue polypeptide: MPSVKVKENEPVDIAIRRFKRACEKAGVLSDVRKREFYEKPTQERKRKKAAAVKRYKKKLQRESIRTTRMY.

Residues 48–60 (KKAAAVKRYKKKL) are compositionally biased toward basic residues. Positions 48–71 (KKAAAVKRYKKKLQRESIRTTRMY) are disordered. The span at 61–71 (QRESIRTTRMY) shows a compositional bias: basic and acidic residues.

It belongs to the bacterial ribosomal protein bS21 family.

The sequence is that of Small ribosomal subunit protein bS21 from Psychrobacter sp. (strain PRwf-1).